The primary structure comprises 476 residues: Dermokine (476 aa).

The signal sequence occupies residues 1 to 21 (MKFQGPLACLLLALCLGSGEA). Composition is skewed to gly residues over residues 153 to 169 (SQGG…GGLG), 193 to 202 (WGQGGNGGPP), 236 to 259 (GSGG…GSGS), and 268 to 298 (SSGG…GSRG). The segment at 153-351 (SQGGLGGQGQ…ESGIQNSETS (199 aa)) is disordered. The segment covering 299-315 (DSGSESSWGSSTGSSSG) has biased composition (low complexity). The segment covering 316–326 (NHGGSGGGNGH) has biased composition (gly residues).

The protein belongs to the dermokine family. As to quaternary structure, homooligomer. Seems to be able to homodimerize and homotrimerize. O-glycosylated. As to expression, expressed in epidermis; in the spinous and granular layers and in placenta. Also found in the epithelia of the small intestine, macrophages of the lung and endothelial cells of the lung. Isoform 15 is expressed in epidermis and placenta. Isoform 1 is expressed in epidermis.

It localises to the secreted. Its function is as follows. May act as a soluble regulator of keratinocyte differentiation. The sequence is that of Dermokine (DMKN) from Homo sapiens (Human).